A 432-amino-acid chain; its full sequence is MPAGRAARTCALLALCLLGAGAQDFGPTRFICTSVPVDADMCAASVAAGGAEELRSSVLQLRETVLQQKETILSQKETIRELTAKLGRCESQSTLDPGAGEARAGGGRKQPGSGKNTMGDLSRTPAAETLSQLGQTLQSLKTRLENLEQYSRLNSSSQTNSLKDLLQSKIDELERQVLSRVNTLEEGKGGPRNDTEERVKIETALTSLHQRISELEKGQKDNRPGDKFQLTFPLRTNYMYAKVKKSLPEMYAFTVCMWLKSSATPGVGTPFSYAVPGQANELVLIEWGNNPMEILINDKVAKLPFVINDGKWHHICVTWTTRDGVWEAYQDGTQGGSGENLAPYHPIKPQGVLVLGQEQDTLGGGFDATQAFVGELAHFNIWDRKLTPGEVYNLATCSTKALSGNVIAWAESHIEIYGGATKWTFEACRQIN.

The signal sequence occupies residues M1–A22. The interval E90 to S122 is disordered. N154 and N193 each carry an N-linked (GlcNAc...) asparagine glycan. The region spanning D226–C428 is the Pentraxin (PTX) domain. Residues C256 and C316 are joined by a disulfide bond. Positions 280, 358, 359, 360, and 370 each coordinate Ca(2+).

In terms of assembly, homooligomer or heterooligomer (probably pentamer) with neuronal pentraxin receptor (NPTXR). Ca(2+) serves as cofactor.

It localises to the secreted. It is found in the cytoplasmic vesicle. The protein localises to the secretory vesicle. The protein resides in the endoplasmic reticulum. Its function is as follows. May be involved in mediating uptake of synaptic material during synapse remodeling or in mediating the synaptic clustering of AMPA glutamate receptors at a subset of excitatory synapses. The polypeptide is Neuronal pentraxin-1 (NPTX1) (Homo sapiens (Human)).